A 513-amino-acid polypeptide reads, in one-letter code: ETS translocation variant 3 (513 aa).

The ETS DNA-binding region spans 35-116 (IQLWHFILEL…KGKRFTYKFN (82 aa)). The interval 138–202 (QSAPPVPTAS…DLEDGSASDW (65 aa)) is disordered. Residues Ser-139, Ser-159, and Ser-315 each carry the phosphoserine modification. The segment at 333-513 (QMHPEEPSQF…ATTATAAADA (181 aa)) is disordered. Basic and acidic residues-rich tracts occupy residues 357–366 (ERVESREEAV), 380–392 (IKVE…DPDS), and 399–419 (GKEE…EEGK). Residue Lys-381 forms a Glycyl lysine isopeptide (Lys-Gly) (interchain with G-Cter in SUMO2) linkage. N6-acetyllysine; alternate is present on Lys-388. Lys-388 participates in a covalent cross-link: Glycyl lysine isopeptide (Lys-Gly) (interchain with G-Cter in SUMO2); alternate. The span at 430–439 (WPSVSISTPS) shows a compositional bias: polar residues. Residues 441–450 (EPLEGTEDSE) are compositionally biased toward acidic residues. 2 stretches are compositionally biased toward basic and acidic residues: residues 451-466 (DRSV…KEDA) and 477-489 (RWND…ELNK). Residues 504-513 (ATTATAAADA) are compositionally biased toward low complexity.

It belongs to the ETS family.

It is found in the nucleus. Functionally, transcriptional repressor that contribute to growth arrest during terminal macrophage differentiation by repressing target genes involved in Ras-dependent proliferation. Represses MMP1 promoter activity. The chain is ETS translocation variant 3 (Etv3) from Mus musculus (Mouse).